A 348-amino-acid polypeptide reads, in one-letter code: VIP36-like protein (348 aa).

Residues 1-38 form the signal peptide; sequence MAATLGPLGSWQQWRRCLLARDGSRMLLLLLLLGSGQG. Residues 39–313 are Lumenal-facing; the sequence is PQQVGAGQTF…APLPPLSGLA (275 aa). Residues 49–274 form the L-type lectin-like domain; sequence EYLKREHSLS…DVISLKLFEL (226 aa). Positions 93 and 128 each coordinate a carbohydrate. Residues aspartate 159, tyrosine 161, and asparagine 163 each contribute to the Ca(2+) site. A carbohydrate is bound at residue 161–163; sequence YPN. Residue asparagine 181 is glycosylated (N-linked (GlcNAc...) asparagine). A carbohydrate is bound at residue histidine 188. Residue aspartate 191 participates in Ca(2+) binding. Cysteine 200 and cysteine 237 are joined by a disulfide. Position 258–260 (258–260) interacts with a carbohydrate; that stretch reads GDL. A helical transmembrane segment spans residues 314–334; that stretch reads LFHIVFFSLVIFVFAIVIGII. Over 335–348 the chain is Cytoplasmic; that stretch reads LYNKWQEQSRKRFY. The Endoplasmic reticulum retention signal motif lies at 344–346; the sequence is RKR.

The protein resides in the endoplasmic reticulum membrane. It is found in the golgi apparatus membrane. Its function is as follows. May be involved in the regulation of export from the endoplasmic reticulum of a subset of glycoproteins. May function as a regulator of ERGIC-53. In Pongo abelii (Sumatran orangutan), this protein is VIP36-like protein (LMAN2L).